The following is a 474-amino-acid chain: Synaptotagmin-15B (474 aa).

Disordered stretches follow at residues 1-62 (MGVV…AASG) and 75-128 (PRAA…PPAV). Low complexity predominate over residues 75–88 (PRAAAGHQQHHGPP). C2 domains lie at 200 to 317 (CLGR…RRVI) and 331 to 452 (EFGD…EHWD).

The protein belongs to the synaptotagmin family.

The sequence is that of Synaptotagmin-15B from Homo sapiens (Human).